Reading from the N-terminus, the 476-residue chain is Bifunctional protein HldE (476 aa).

A ribokinase region spans residues 1-318 (MKPVLPDYSK…AEAVHGSKDT (318 aa)). 195 to 198 (NMSE) contributes to the ATP binding site. The active site involves Asp264. The tract at residues 344–476 (MTNGCFDILH…IIEAIKGGRG (133 aa)) is cytidylyltransferase.

In the N-terminal section; belongs to the carbohydrate kinase PfkB family. The protein in the C-terminal section; belongs to the cytidylyltransferase family. In terms of assembly, homodimer.

The catalysed reaction is D-glycero-beta-D-manno-heptose 7-phosphate + ATP = D-glycero-beta-D-manno-heptose 1,7-bisphosphate + ADP + H(+). The enzyme catalyses D-glycero-beta-D-manno-heptose 1-phosphate + ATP + H(+) = ADP-D-glycero-beta-D-manno-heptose + diphosphate. The protein operates within nucleotide-sugar biosynthesis; ADP-L-glycero-beta-D-manno-heptose biosynthesis; ADP-L-glycero-beta-D-manno-heptose from D-glycero-beta-D-manno-heptose 7-phosphate: step 1/4. It participates in nucleotide-sugar biosynthesis; ADP-L-glycero-beta-D-manno-heptose biosynthesis; ADP-L-glycero-beta-D-manno-heptose from D-glycero-beta-D-manno-heptose 7-phosphate: step 3/4. Catalyzes the phosphorylation of D-glycero-D-manno-heptose 7-phosphate at the C-1 position to selectively form D-glycero-beta-D-manno-heptose-1,7-bisphosphate. Its function is as follows. Catalyzes the ADP transfer from ATP to D-glycero-beta-D-manno-heptose 1-phosphate, yielding ADP-D-glycero-beta-D-manno-heptose. The sequence is that of Bifunctional protein HldE from Vibrio cholerae serotype O1 (strain M66-2).